A 965-amino-acid chain; its full sequence is UvrABC system protein A (965 aa).

32–39 contacts ATP; it reads GLSGSGKS. The C4-type zinc-finger motif lies at 254-281; that stretch reads CPVCDYSLPELEPRLFSFNAPMGACPAC. ABC transporter domains lie at 311-588 and 608-937; these read WDRR…PRSL and PNAT…HFLA. Residue 641–648 participates in ATP binding; sequence GVSGSGKS. The segment at 740–766 adopts a C4-type zinc-finger fold; the sequence is CEACEGDGLIKVEMHFLPDVYVPCDVC.

It belongs to the ABC transporter superfamily. UvrA family. In terms of assembly, forms a heterotetramer with UvrB during the search for lesions.

It localises to the cytoplasm. Functionally, the UvrABC repair system catalyzes the recognition and processing of DNA lesions. UvrA is an ATPase and a DNA-binding protein. A damage recognition complex composed of 2 UvrA and 2 UvrB subunits scans DNA for abnormalities. When the presence of a lesion has been verified by UvrB, the UvrA molecules dissociate. This chain is UvrABC system protein A, found in Xylella fastidiosa (strain 9a5c).